Reading from the N-terminus, the 377-residue chain is Queuine tRNA-ribosyltransferase (377 aa).

Asp94 functions as the Proton acceptor in the catalytic mechanism. Substrate contacts are provided by residues 94–98 (DSGGF), Asp148, Gln191, and Gly218. Positions 249–255 (GVGTPDD) are RNA binding. Asp268 (nucleophile) is an active-site residue. An RNA binding; important for wobble base 34 recognition region spans residues 273–277 (TRAGR).

This sequence belongs to the queuine tRNA-ribosyltransferase family. As to quaternary structure, homodimer. Within each dimer, one monomer is responsible for RNA recognition and catalysis, while the other monomer binds to the replacement base PreQ1.

It catalyses the reaction 7-aminomethyl-7-carbaguanine + guanosine(34) in tRNA = 7-aminomethyl-7-carbaguanosine(34) in tRNA + guanine. It participates in tRNA modification; tRNA-queuosine biosynthesis. Catalyzes the base-exchange of a guanine (G) residue with the queuine precursor 7-aminomethyl-7-deazaguanine (PreQ1) at position 34 (anticodon wobble position) in tRNAs with GU(N) anticodons (tRNA-Asp, -Asn, -His and -Tyr). Catalysis occurs through a double-displacement mechanism. The nucleophile active site attacks the C1' of nucleotide 34 to detach the guanine base from the RNA, forming a covalent enzyme-RNA intermediate. The proton acceptor active site deprotonates the incoming PreQ1, allowing a nucleophilic attack on the C1' of the ribose to form the product. After dissociation, two additional enzymatic reactions on the tRNA convert PreQ1 to queuine (Q), resulting in the hypermodified nucleoside queuosine (7-(((4,5-cis-dihydroxy-2-cyclopenten-1-yl)amino)methyl)-7-deazaguanosine). The chain is Queuine tRNA-ribosyltransferase from Brucella suis biovar 1 (strain 1330).